A 256-amino-acid polypeptide reads, in one-letter code: Protein N-terminal and lysine N-methyltransferase EFM7 (256 aa).

The interval 1–26 (MSDTESLNDALGLFDEPEDFRPEKPK) is disordered. S-adenosyl-L-methionine-binding positions include Trp-64, 90 to 92 (GAA), Asp-112, Trp-145, and Ser-168.

The protein belongs to the class I-like SAM-binding methyltransferase superfamily. EFM7 family.

Its subcellular location is the cytoplasm. Its function is as follows. S-adenosyl-L-methionine-dependent protein methyltransferase that trimethylates the N-terminal glycine 'Gly-2' of elongation factor 1-alpha, before also catalyzing the mono- and dimethylation of 'Lys-3'. In Candida glabrata (strain ATCC 2001 / BCRC 20586 / JCM 3761 / NBRC 0622 / NRRL Y-65 / CBS 138) (Yeast), this protein is Protein N-terminal and lysine N-methyltransferase EFM7.